Reading from the N-terminus, the 262-residue chain is Phosphate import ATP-binding protein PstB (262 aa).

One can recognise an ABC transporter domain in the interval 15–257 (AKASNLNLWY…PQKSKTEQYI (243 aa)). Residue 47 to 54 (GPSGCGKS) participates in ATP binding.

The protein belongs to the ABC transporter superfamily. Phosphate importer (TC 3.A.1.7) family. The complex is composed of two ATP-binding proteins (PstB), two transmembrane proteins (PstC and PstA) and a solute-binding protein (PstS).

The protein localises to the cell inner membrane. The catalysed reaction is phosphate(out) + ATP + H2O = ADP + 2 phosphate(in) + H(+). Part of the ABC transporter complex PstSACB involved in phosphate import. Responsible for energy coupling to the transport system. In Wolinella succinogenes (strain ATCC 29543 / DSM 1740 / CCUG 13145 / JCM 31913 / LMG 7466 / NCTC 11488 / FDC 602W) (Vibrio succinogenes), this protein is Phosphate import ATP-binding protein PstB.